We begin with the raw amino-acid sequence, 564 residues long: Phenylalanine--tRNA ligase beta subunit (564 aa).

In terms of domain architecture, B5 spans 286–362 (YFQNMLEVNV…IGMGLDSFKP (77 aa)). The Mg(2+) site is built by aspartate 340, aspartate 346, glutamate 349, and glutamate 350.

This sequence belongs to the phenylalanyl-tRNA synthetase beta subunit family. Type 2 subfamily. As to quaternary structure, tetramer of two alpha and two beta subunits. The cofactor is Mg(2+).

The protein localises to the cytoplasm. It carries out the reaction tRNA(Phe) + L-phenylalanine + ATP = L-phenylalanyl-tRNA(Phe) + AMP + diphosphate + H(+). The polypeptide is Phenylalanine--tRNA ligase beta subunit (Borrelia turicatae (strain 91E135)).